The primary structure comprises 111 residues: Large ribosomal subunit protein uL22 (111 aa).

It belongs to the universal ribosomal protein uL22 family. In terms of assembly, part of the 50S ribosomal subunit.

Functionally, this protein binds specifically to 23S rRNA; its binding is stimulated by other ribosomal proteins, e.g. L4, L17, and L20. It is important during the early stages of 50S assembly. It makes multiple contacts with different domains of the 23S rRNA in the assembled 50S subunit and ribosome. The globular domain of the protein is located near the polypeptide exit tunnel on the outside of the subunit, while an extended beta-hairpin is found that lines the wall of the exit tunnel in the center of the 70S ribosome. This chain is Large ribosomal subunit protein uL22, found in Clostridium novyi (strain NT).